Here is a 378-residue protein sequence, read N- to C-terminus: Queuine tRNA-ribosyltransferase (378 aa).

Aspartate 89 functions as the Proton acceptor in the catalytic mechanism. Residues 89–93 (DSGGF), aspartate 143, glutamine 194, and glycine 221 contribute to the substrate site. The RNA binding stretch occupies residues 252 to 258 (GVGTPAN). Aspartate 271 (nucleophile) is an active-site residue. Positions 276-280 (ARNGR) are RNA binding; important for wobble base 34 recognition. Zn(2+) is bound by residues cysteine 309, cysteine 311, cysteine 314, and histidine 340.

The protein belongs to the queuine tRNA-ribosyltransferase family. Homodimer. Within each dimer, one monomer is responsible for RNA recognition and catalysis, while the other monomer binds to the replacement base PreQ1. Zn(2+) is required as a cofactor.

The enzyme catalyses 7-aminomethyl-7-carbaguanine + guanosine(34) in tRNA = 7-aminomethyl-7-carbaguanosine(34) in tRNA + guanine. It participates in tRNA modification; tRNA-queuosine biosynthesis. Its function is as follows. Catalyzes the base-exchange of a guanine (G) residue with the queuine precursor 7-aminomethyl-7-deazaguanine (PreQ1) at position 34 (anticodon wobble position) in tRNAs with GU(N) anticodons (tRNA-Asp, -Asn, -His and -Tyr). Catalysis occurs through a double-displacement mechanism. The nucleophile active site attacks the C1' of nucleotide 34 to detach the guanine base from the RNA, forming a covalent enzyme-RNA intermediate. The proton acceptor active site deprotonates the incoming PreQ1, allowing a nucleophilic attack on the C1' of the ribose to form the product. After dissociation, two additional enzymatic reactions on the tRNA convert PreQ1 to queuine (Q), resulting in the hypermodified nucleoside queuosine (7-(((4,5-cis-dihydroxy-2-cyclopenten-1-yl)amino)methyl)-7-deazaguanosine). The protein is Queuine tRNA-ribosyltransferase of Lachnoclostridium phytofermentans (strain ATCC 700394 / DSM 18823 / ISDg) (Clostridium phytofermentans).